The following is a 100-amino-acid chain: Large ribosomal subunit protein uL23 (100 aa).

It belongs to the universal ribosomal protein uL23 family. In terms of assembly, part of the 50S ribosomal subunit. Contacts protein L29, and trigger factor when it is bound to the ribosome.

Functionally, one of the early assembly proteins it binds 23S rRNA. One of the proteins that surrounds the polypeptide exit tunnel on the outside of the ribosome. Forms the main docking site for trigger factor binding to the ribosome. This is Large ribosomal subunit protein uL23 from Vibrio cholerae serotype O1 (strain ATCC 39541 / Classical Ogawa 395 / O395).